Reading from the N-terminus, the 357-residue chain is MERGVRVFGEPKVELHIHLDGAIRPETILHFGKKRGVPLPGSTVDELMKHVSYQTPLSLKLFLEKFNHYMPAIAGDREAVRRIAYELVETKAKEGVVYVEVRYSPHLLANCRVEPIPWGQAEGDLTPEEVVNLVNQGLQDGERNFRIKARSILCCMRHMPSWSPEVVELCKKYQNNSVVAIDLAGDELLMASSDHKAAYEEAERCGIHRTVHAGEAGPATMIKEAVYLLKAERIGHGYHVLEDPELYRELLRTRMHFEVCPWSSYLTGACLPDFRKHPVVQFKKDQANYSINTDDPLIFNSNIDKDYGIVKEYMDFTEEDFKRVNINAAQSSFLPEKEKQELLNTLYEAYGMVPATS.

Zn(2+) contacts are provided by H16 and H18. Positions 18, 20, and 185 each coordinate substrate. H212 is a Zn(2+) binding site. The active-site Proton donor is E215. D294 contacts Zn(2+). Substrate is bound at residue D295.

This sequence belongs to the metallo-dependent hydrolases superfamily. Adenosine and AMP deaminases family. The cofactor is Zn(2+).

The protein resides in the cell membrane. Its subcellular location is the cell junction. It localises to the cytoplasmic vesicle lumen. It is found in the cytoplasm. The protein localises to the lysosome. The catalysed reaction is adenosine + H2O + H(+) = inosine + NH4(+). It carries out the reaction 2'-deoxyadenosine + H2O + H(+) = 2'-deoxyinosine + NH4(+). Its function is as follows. Catalyzes the hydrolytic deamination of adenosine and 2-deoxyadenosine. Plays an important role in purine metabolism and in adenosine homeostasis. Modulates signaling by extracellular adenosine, and so contributes indirectly to cellular signaling events. May act as a positive regulator of T-cell coactivation. This Gallus gallus (Chicken) protein is Adenosine deaminase (ADA).